A 424-amino-acid chain; its full sequence is PDZ and LIM domain protein 7 (424 aa).

The PDZ domain maps to Met-1–Gln-85. At Ser-78 the chain carries Phosphoserine. The segment covering Leu-81–Asp-98 has biased composition (polar residues). The disordered stretch occupies residues Leu-81–Met-221. Thr-96 is subject to Phosphothreonine. The segment covering Ser-110–Pro-123 has biased composition (basic and acidic residues). The span at Glu-174–Arg-187 shows a compositional bias: pro residues. Residues Lys-204 to Met-221 show a composition bias toward polar residues. LIM zinc-binding domains are found at residues Pro-247 to Ala-305, Pro-306 to Thr-365, and Lys-366 to Val-424.

As to quaternary structure, binds via its LIM zinc-binding 3 domain (LIM 3) domain to endocytic codes of INSR, but not with those of IGF1R, LDLR, TFRC, or EGFR. Interacts with various PKC isoforms through the LIM zinc-binding domains. Binds to RET in a phosphorylation-independent manner via its LIM zinc-binding 2 domain (LIM 2). Probably part of a complex with SHC and the RET dimer. Interacts with TPM2, TBX4 and TBX5.

Its subcellular location is the cytoplasm. It localises to the cytoskeleton. May function as a scaffold on which the coordinated assembly of proteins can occur. May play a role as an adapter that, via its PDZ domain, localizes LIM-binding proteins to actin filaments of both skeletal muscle and nonmuscle tissues. Involved in both of the two fundamental mechanisms of bone formation, direct bone formation (e.g. embryonic flat bones mandible and cranium), and endochondral bone formation (e.g. embryonic long bone development). Plays a role during fracture repair. Involved in BMP6 signaling pathway. This chain is PDZ and LIM domain protein 7 (PDLIM7), found in Bos taurus (Bovine).